The chain runs to 502 residues: Actin-binding protein WASF3 (502 aa).

The stretch at 57–93 (NEANNFYIRANSLQDRIDRLAVKVTQLDSTVEEVSLQ) forms a coiled coil. The residue at position 151 (Tyr151) is a Phosphotyrosine; by ABL1. A coiled-coil region spans residues 162-206 (KEKMLQDTEDKRKEKRRQKEQKRIDGTTREVKKVRKARNRRQEWN). 2 disordered regions span residues 169–210 (TEDK…MMAY) and 223–443 (SVYH…ARSD). Positions 182–192 (QKRIDGTTREV) are enriched in basic and acidic residues. Polar residues predominate over residues 223–237 (SVYHGASSEGSLSPD). Tyr248 bears the Phosphotyrosine; by ABL1 mark. Residues 302–312 (QQPPPPPPPQA) are compositionally biased toward pro residues. A Phosphotyrosine; by ABL1 modification is found at Tyr337. 2 stretches are compositionally biased toward pro residues: residues 341 to 352 (SGPPPPPPPPVI) and 394 to 410 (APPPPGPPPPPPGPPGP). Low complexity predominate over residues 411–423 (GSSLSSSPMHGPP). One can recognise a WH2 domain in the interval 440–457 (ARSDLLAAIRMGIQLKKV). Tyr486 is subject to Phosphotyrosine; by ABL1.

Belongs to the SCAR/WAVE family. As to quaternary structure, binds actin and the Arp2/3 complex. In terms of processing, phosphorylation by ABL1 promotes lamellipodia formation and cell migration. In terms of tissue distribution, expressed in ovary and brain.

The protein resides in the cytoplasm. Its subcellular location is the cytoskeleton. Functionally, downstream effector molecules involved in the transmission of signals from tyrosine kinase receptors and small GTPases to the actin cytoskeleton. Plays a role in the regulation of cell morphology and cytoskeletal organization. Required in the control of cell shape. This is Actin-binding protein WASF3 (WASF3) from Homo sapiens (Human).